Here is a 234-residue protein sequence, read N- to C-terminus: Proteasome subunit alpha type-2 (234 aa).

N-acetylalanine is present on alanine 2. The residue at position 6 (tyrosine 6) is a Phosphotyrosine. Residues serine 7, serine 14, and serine 16 each carry the phosphoserine modification. Residue tyrosine 24 is modified to Phosphotyrosine. Lysine 70 bears the N6-acetyllysine mark. A phosphotyrosine mark is found at tyrosine 76 and tyrosine 121. Position 171 is an N6-acetyllysine (lysine 171).

It belongs to the peptidase T1A family. The 26S proteasome consists of a 20S proteasome core and two 19S regulatory subunits. The 20S proteasome core is a barrel-shaped complex made of 28 subunits that are arranged in four stacked rings. The two outer rings are each formed by seven alpha subunits, and the two inner rings are formed by seven beta subunits. The proteolytic activity is exerted by three beta-subunits PSMB5, PSMB6 and PSMB7. Post-translationally, phosphorylated on tyrosine residues; which may be important for nuclear import. As to expression, detected in liver (at protein level).

The protein resides in the cytoplasm. Its subcellular location is the nucleus. Its function is as follows. Component of the 20S core proteasome complex involved in the proteolytic degradation of most intracellular proteins. This complex plays numerous essential roles within the cell by associating with different regulatory particles. Associated with two 19S regulatory particles, forms the 26S proteasome and thus participates in the ATP-dependent degradation of ubiquitinated proteins. The 26S proteasome plays a key role in the maintenance of protein homeostasis by removing misfolded or damaged proteins that could impair cellular functions, and by removing proteins whose functions are no longer required. Associated with the PA200 or PA28, the 20S proteasome mediates ubiquitin-independent protein degradation. This type of proteolysis is required in several pathways including spermatogenesis (20S-PA200 complex) or generation of a subset of MHC class I-presented antigenic peptides (20S-PA28 complex). This Mus musculus (Mouse) protein is Proteasome subunit alpha type-2 (Psma2).